The chain runs to 263 residues: 5'-nucleotidase SurE (263 aa).

A divalent metal cation contacts are provided by Asp8, Asp9, Ser40, and Asn93.

Belongs to the SurE nucleotidase family. The cofactor is a divalent metal cation.

The protein resides in the cytoplasm. The enzyme catalyses a ribonucleoside 5'-phosphate + H2O = a ribonucleoside + phosphate. Nucleotidase that shows phosphatase activity on nucleoside 5'-monophosphates. The chain is 5'-nucleotidase SurE from Beijerinckia indica subsp. indica (strain ATCC 9039 / DSM 1715 / NCIMB 8712).